We begin with the raw amino-acid sequence, 65 residues long: Hirudin-2' (65 aa).

Positions isoleucine 1 to tyrosine 3 are interaction with thrombin active site. 3 disulfides stabilise this stretch: cysteine 6–cysteine 14, cysteine 16–cysteine 28, and cysteine 22–cysteine 39. The interval cysteine 39–glutamine 65 is disordered. A glycan (O-linked (GalNAc...) threonine) is linked at threonine 45. The interaction with fibrinogen-binding exosite of thrombin stretch occupies residues aspartate 55–glutamine 65. A compositionally biased stretch (acidic residues) spans aspartate 55–glutamine 65. Residue tyrosine 63 is modified to Sulfotyrosine.

The protein belongs to the protease inhibitor I14 (hirudin) family.

It localises to the secreted. In terms of biological role, hirudin is a potent thrombin-specific protease inhibitor. It forms a stable non-covalent complex with alpha-thrombin, thereby abolishing its ability to cleave fibrinogen. This chain is Hirudin-2', found in Hirudo medicinalis (Medicinal leech).